Here is a 189-residue protein sequence, read N- to C-terminus: Ras-like protein rasG (189 aa).

GTP is bound at residue 10 to 17 (GGGGVGKS). An Effector region motif is present at residues 32-40 (YDPTIEDSY). Residues 57-61 (DTAGQ) and 116-119 (NKCD) each bind GTP. The disordered stretch occupies residues 169–189 (KGDSKPEKGKKKRPLKACTLL). At C186 the chain carries Cysteine methyl ester. The S-geranylgeranyl cysteine moiety is linked to residue C186. A propeptide spans 187–189 (TLL) (removed in mature form).

The protein belongs to the small GTPase superfamily. Ras family. In terms of assembly, interacts with ripA.

Its subcellular location is the cell membrane. It carries out the reaction GTP + H2O = GDP + phosphate + H(+). Alternates between an inactive form bound to GDP and an active form bound to GTP. Activated by a guanine nucleotide-exchange factor (GEF) and inactivated by a GTPase-activating protein (GAP). Ras proteins bind GDP/GTP and possess intrinsic GTPase activity. The chain is Ras-like protein rasG (rasG) from Dictyostelium discoideum (Social amoeba).